A 425-amino-acid chain; its full sequence is Phosphomethylpyrimidine synthase (425 aa).

Residues Met94, Tyr123, His162, 184-186 (SRG), 225-228 (NGMR), and Glu264 each bind substrate. His268 contacts Zn(2+). Tyr291 contributes to the substrate binding site. His332 contributes to the Zn(2+) binding site. The [4Fe-4S] cluster site is built by Cys407, Cys410, and Cys414.

It belongs to the ThiC family. Requires [4Fe-4S] cluster as cofactor.

The enzyme catalyses 5-amino-1-(5-phospho-beta-D-ribosyl)imidazole + S-adenosyl-L-methionine = 4-amino-2-methyl-5-(phosphooxymethyl)pyrimidine + CO + 5'-deoxyadenosine + formate + L-methionine + 3 H(+). It participates in cofactor biosynthesis; thiamine diphosphate biosynthesis. Its function is as follows. Catalyzes the synthesis of the hydroxymethylpyrimidine phosphate (HMP-P) moiety of thiamine from aminoimidazole ribotide (AIR) in a radical S-adenosyl-L-methionine (SAM)-dependent reaction. The chain is Phosphomethylpyrimidine synthase from Methanocorpusculum labreanum (strain ATCC 43576 / DSM 4855 / Z).